A 1216-amino-acid chain; its full sequence is DNA-directed RNA polymerase subunit beta' (1216 aa).

Residues cysteine 60, cysteine 62, cysteine 75, and cysteine 78 each coordinate Zn(2+). Positions 450, 452, and 454 each coordinate Mg(2+). Positions 819, 893, 900, and 903 each coordinate Zn(2+).

The protein belongs to the RNA polymerase beta' chain family. The RNAP catalytic core consists of 2 alpha, 1 beta, 1 beta' and 1 omega subunit. When a sigma factor is associated with the core the holoenzyme is formed, which can initiate transcription. Requires Mg(2+) as cofactor. The cofactor is Zn(2+).

The catalysed reaction is RNA(n) + a ribonucleoside 5'-triphosphate = RNA(n+1) + diphosphate. In terms of biological role, DNA-dependent RNA polymerase catalyzes the transcription of DNA into RNA using the four ribonucleoside triphosphates as substrates. The sequence is that of DNA-directed RNA polymerase subunit beta' from Streptococcus agalactiae serotype Ia (strain ATCC 27591 / A909 / CDC SS700).